The sequence spans 324 residues: Beta-ketoacyl-[acyl-carrier-protein] synthase III (324 aa).

Catalysis depends on residues C112 and H249. Residues Q250–R254 are ACP-binding. The active site involves N279.

It belongs to the thiolase-like superfamily. FabH family. As to quaternary structure, homodimer.

It is found in the cytoplasm. The enzyme catalyses malonyl-[ACP] + acetyl-CoA + H(+) = 3-oxobutanoyl-[ACP] + CO2 + CoA. It participates in lipid metabolism; fatty acid biosynthesis. Its function is as follows. Catalyzes the condensation reaction of fatty acid synthesis by the addition to an acyl acceptor of two carbons from malonyl-ACP. Catalyzes the first condensation reaction which initiates fatty acid synthesis and may therefore play a role in governing the total rate of fatty acid production. Possesses both acetoacetyl-ACP synthase and acetyl transacylase activities. Its substrate specificity determines the biosynthesis of branched-chain and/or straight-chain of fatty acids. This Streptococcus gordonii (strain Challis / ATCC 35105 / BCRC 15272 / CH1 / DL1 / V288) protein is Beta-ketoacyl-[acyl-carrier-protein] synthase III.